Consider the following 1108-residue polypeptide: Valine--tRNA ligase, mitochondrial 1 (1108 aa).

A mitochondrion-targeting transit peptide spans 1–46 (MSLLFLRRAKPLFVSCCSATHSRSSFLSPTLTNQLVRSFHGSRTMS). The span at 57–93 (ELERKKKKEEKAKEKELKKQKALEKERLAELKAKQAK) shows a compositional bias: basic and acidic residues. Residues 57 to 138 (ELERKKKKEE…RKRLSSQMAK (82 aa)) are disordered. The 'HIGH' region signature appears at 177-187 (PNVTGALHIGH). The short motif at 695–699 (KMSKS) is the 'KMSKS' region element. K698 serves as a coordination point for ATP. Residues 1032–1064 (AINTEAEQEKIRNKIGELQKQKEKLQKMMSVST) adopt a coiled-coil conformation.

It belongs to the class-I aminoacyl-tRNA synthetase family.

The protein resides in the mitochondrion. Its subcellular location is the cytoplasm. The protein localises to the cytosol. It carries out the reaction tRNA(Val) + L-valine + ATP = L-valyl-tRNA(Val) + AMP + diphosphate. Functionally, required for embryo development and seed viability. In Arabidopsis thaliana (Mouse-ear cress), this protein is Valine--tRNA ligase, mitochondrial 1.